The sequence spans 142 residues: Hemoglobin subunit alpha-A (142 aa).

Positions 2 to 142 (VLSAADKTNV…VGTVLTAKYR (141 aa)) constitute a Globin domain. His-59 contacts O2. His-88 serves as a coordination point for heme b.

The protein belongs to the globin family. In terms of assembly, heterotetramer of two alpha chains and two beta chains. As to expression, red blood cells.

Functionally, involved in oxygen transport from the lung to the various peripheral tissues. The chain is Hemoglobin subunit alpha-A (HBAA) from Anser anser anser (Western greylag goose).